The chain runs to 667 residues: DNA ligase (667 aa).

NAD(+)-binding positions include 32–36 (DKDYD) and 80–81 (SL). The active-site N6-AMP-lysine intermediate is the Lys121. NAD(+)-binding residues include Arg143, Glu178, and Lys314. 4 residues coordinate Zn(2+): Cys407, Cys410, Cys423, and Cys429. Positions 587-667 (IVESIFKDKT…EFEKMLGRES (81 aa)) constitute a BRCT domain.

The protein belongs to the NAD-dependent DNA ligase family. LigA subfamily. Requires Mg(2+) as cofactor. Mn(2+) serves as cofactor.

It catalyses the reaction NAD(+) + (deoxyribonucleotide)n-3'-hydroxyl + 5'-phospho-(deoxyribonucleotide)m = (deoxyribonucleotide)n+m + AMP + beta-nicotinamide D-nucleotide.. DNA ligase that catalyzes the formation of phosphodiester linkages between 5'-phosphoryl and 3'-hydroxyl groups in double-stranded DNA using NAD as a coenzyme and as the energy source for the reaction. It is essential for DNA replication and repair of damaged DNA. This is DNA ligase from Clostridium botulinum (strain Eklund 17B / Type B).